We begin with the raw amino-acid sequence, 283 residues long: Shikimate dehydrogenase (NADP(+)) (283 aa).

Residues 16–18 (SLS) and Thr63 each bind shikimate. The active-site Proton acceptor is Lys67. Asp79 contributes to the NADP(+) binding site. 2 residues coordinate shikimate: Asn88 and Asp103. NADP(+) is bound by residues 128-132 (GAGGA), Ala223, and Gly243.

This sequence belongs to the shikimate dehydrogenase family. In terms of assembly, homodimer.

It carries out the reaction shikimate + NADP(+) = 3-dehydroshikimate + NADPH + H(+). It functions in the pathway metabolic intermediate biosynthesis; chorismate biosynthesis; chorismate from D-erythrose 4-phosphate and phosphoenolpyruvate: step 4/7. Its function is as follows. Involved in the biosynthesis of the chorismate, which leads to the biosynthesis of aromatic amino acids. Catalyzes the reversible NADPH linked reduction of 3-dehydroshikimate (DHSA) to yield shikimate (SA). This is Shikimate dehydrogenase (NADP(+)) from Xanthomonas campestris pv. campestris (strain 8004).